Reading from the N-terminus, the 27-residue chain is Flagellar filament 31.5 kDa core protein (27 aa).

Belongs to the bacterial flagellin family. The flagellum consists of an outer layer composed of repeating units of FlaA around a core that contains one or all of five antigenically related polypeptides.

Its subcellular location is the periplasmic flagellum. It is found in the periplasm. Functionally, component of the core of the flagella. This is Flagellar filament 31.5 kDa core protein from Spirochaeta aurantia.